Here is a 293-residue protein sequence, read N- to C-terminus: Protease HtpX (293 aa).

The next 2 membrane-spanning stretches (helical) occupy residues 4 to 24 (IALFLLTNLGVMVVFGLILSL) and 32 to 52 (VMGLMIMAGLFGFGGAFVSLL). Histidine 139 is a binding site for Zn(2+). Glutamate 140 is an active-site residue. Position 143 (histidine 143) interacts with Zn(2+). The next 2 membrane-spanning stretches (helical) occupy residues 158-178 (IVNTFVIFISRILAQLAAGFM) and 193-213 (MVYFVVSMVLELVFGIVASTI). Glutamate 222 is a binding site for Zn(2+).

This sequence belongs to the peptidase M48B family. Requires Zn(2+) as cofactor.

The protein resides in the cell inner membrane. The polypeptide is Protease HtpX (Erwinia tasmaniensis (strain DSM 17950 / CFBP 7177 / CIP 109463 / NCPPB 4357 / Et1/99)).